Consider the following 440-residue polypeptide: T-box transcription factor T homolog 2 (440 aa).

Positions 44-215 form a DNA-binding region, T-box; the sequence is LWEKFKSLTN…HNPFAKAFLD (172 aa). Disordered regions lie at residues 282–303 and 393–440; these read APYPHPYQRSSPPTNYGHDTAA and TTAS…MPSM. Positions 409-440 are enriched in polar residues; it reads STDSGYGHSTTPPAPQTRITSNNWSPMTMPSM.

As to expression, mesoderm and notochord.

It localises to the nucleus. Its function is as follows. Involved in the transcriptional regulation of genes required for mesoderm formation and differentiation. The sequence is that of T-box transcription factor T homolog 2 from Branchiostoma floridae (Florida lancelet).